A 137-amino-acid polypeptide reads, in one-letter code: Small ribosomal subunit protein bS16 (137 aa).

Composition is skewed to basic and acidic residues over residues 80–99 and 111–125; these read KSPE…KRLQ and VATE…KEAP. Residues 80-137 are disordered; it reads KSPEEAQKGGMRKGEFKRLQAEQAAKAQKKAVATEEPKAEEAKEAPPAESQAAEGKEE. Residues 126-137 show a composition bias toward low complexity; it reads PAESQAAEGKEE.

This sequence belongs to the bacterial ribosomal protein bS16 family.

This chain is Small ribosomal subunit protein bS16, found in Coxiella burnetii (strain Dugway 5J108-111).